A 101-amino-acid polypeptide reads, in one-letter code: Small ribosomal subunit protein uS14 (101 aa).

Positions 1-26 (MAKVSSIQKNKSRQKKSQSLHNKRSE) are disordered. Positions 10-22 (NKSRQKKSQSLHN) are enriched in basic residues.

It belongs to the universal ribosomal protein uS14 family. In terms of assembly, part of the 30S ribosomal subunit. Contacts proteins S3 and S10.

In terms of biological role, binds 16S rRNA, required for the assembly of 30S particles and may also be responsible for determining the conformation of the 16S rRNA at the A site. This is Small ribosomal subunit protein uS14 from Rickettsia prowazekii (strain Madrid E).